The sequence spans 406 residues: Uronyl 2-sulfotransferase (406 aa).

Residues 1–49 (MKKKQQHPGGGADPWPHGAPMGGAPPGLGSWKRRVPLLPFLRFSLRDYG) lie on the Cytoplasmic side of the membrane. The chain crosses the membrane as a helical; Signal-anchor for type II membrane protein span at residues 50–70 (FCMATLLVFCLGSLLYQLSGG). Topologically, residues 71–406 (PPRFLLDLRQ…EKWLEDIYKR (336 aa)) are lumenal. N-linked (GlcNAc...) asparagine glycans are attached at residues asparagine 84, asparagine 140, and asparagine 155. The active site involves histidine 168. N-linked (GlcNAc...) asparagine glycans are attached at residues asparagine 173 and asparagine 319. Residues 387 to 399 (EPIDDEEQDDEKW) are compositionally biased toward acidic residues. The disordered stretch occupies residues 387 to 406 (EPIDDEEQDDEKWLEDIYKR).

This sequence belongs to the sulfotransferase 3 family. In terms of tissue distribution, widely expressed.

Its subcellular location is the golgi apparatus membrane. Its function is as follows. Sulfotransferase that catalyzes the transfer of sulfate to the position 2 of uronyl residues in glycosaminoglycan chains. Has mainly activity toward iduronyl residues in dermatan sulfate, and weaker activity toward glucuronyl residues of chondroitin sulfate. Has little to no activity toward desulfated N-resulfated heparin or N-sulfoheparosan. The protein is Uronyl 2-sulfotransferase of Homo sapiens (Human).